The primary structure comprises 517 residues: Ladinin-1 (517 aa).

Residues 1-401 (MAVSRKDWSA…SASMKLPDNT (401 aa)) form a disordered region. Serine 38 bears the Phosphoserine mark. The span at 48–58 (LSQNGDRQASA) shows a compositional bias: polar residues. Phosphoserine is present on residues serine 64, serine 78, serine 121, and serine 123. Residues 120–131 (NSLSPVQATQKP) are compositionally biased toward polar residues. Composition is skewed to basic and acidic residues over residues 134–151 (SKKELEIPPRRRLSREQR) and 161–174 (LVGREPEERKKGVP). SEK repeat units lie at residues 203–205 (SEK), 209–211 (SEK), 215–217 (SEK), 221–223 (SEK), 227–229 (SEK), 239–241 (SEK), 257–259 (SEK), and 269–271 (SEK). An 8 X SEK repeats region spans residues 203 to 271 (SEKVLASEKT…IFEKALASEK (69 aa)). Basic and acidic residues predominate over residues 219-233 (AVSEKRNSSEKKSVL). 3 positions are modified to phosphoserine: serine 347, serine 356, and serine 394. Residues 355–373 (SSPTQRTYSSSLKRSSPRT) show a composition bias toward polar residues. The residue at position 424 (arginine 424) is an Omega-N-methylarginine. The tract at residues 481-517 (RTQESGDQDPQEAQKASSATERTQWGQKSDSSLDAEV) is disordered. Serine 485 is modified (phosphoserine). Over residues 494-517 (QKASSATERTQWGQKSDSSLDAEV) the composition is skewed to polar residues.

It is found in the secreted. The protein localises to the extracellular space. The protein resides in the extracellular matrix. Its subcellular location is the basement membrane. Anchoring filament protein which is a component of the basement membrane zone. In Homo sapiens (Human), this protein is Ladinin-1 (LAD1).